Reading from the N-terminus, the 265-residue chain is Leucyl/phenylalanyl-tRNA--protein transferase (265 aa).

The tract at residues 244-265 (LDTGPDPASSSVTEISLRPAAP) is disordered.

Belongs to the L/F-transferase family.

The protein localises to the cytoplasm. The enzyme catalyses N-terminal L-lysyl-[protein] + L-leucyl-tRNA(Leu) = N-terminal L-leucyl-L-lysyl-[protein] + tRNA(Leu) + H(+). It catalyses the reaction N-terminal L-arginyl-[protein] + L-leucyl-tRNA(Leu) = N-terminal L-leucyl-L-arginyl-[protein] + tRNA(Leu) + H(+). It carries out the reaction L-phenylalanyl-tRNA(Phe) + an N-terminal L-alpha-aminoacyl-[protein] = an N-terminal L-phenylalanyl-L-alpha-aminoacyl-[protein] + tRNA(Phe). Functionally, functions in the N-end rule pathway of protein degradation where it conjugates Leu, Phe and, less efficiently, Met from aminoacyl-tRNAs to the N-termini of proteins containing an N-terminal arginine or lysine. The chain is Leucyl/phenylalanyl-tRNA--protein transferase from Methylibium petroleiphilum (strain ATCC BAA-1232 / LMG 22953 / PM1).